Reading from the N-terminus, the 596-residue chain is Probable ABC transporter ECU01_0200/ECU01_1410 (596 aa).

3 consecutive transmembrane segments (helical) span residues 26 to 46 (ALMAVVAACIVLGKWFDVMSI), 173 to 193 (LVPILFTAAAYAAYTCVMLRI), and 289 to 309 (LSVLFSFVLSIDASMWTLGGI). The ABC transmembrane type-1 domain occupies 39–318 (KWFDVMSIKR…IARDLGFWLT (280 aa)). An ABC transporter domain is found at 361–593 (VEFDDVSFAY…RGMYWRMKTA (233 aa)). ATP contacts are provided by residues Tyr-370 and 400-411 (GRPGSGKSTILR).

The protein belongs to the ABC transporter superfamily. ABCB family. Heavy Metal importer (TC 3.A.1.210) subfamily.

The protein localises to the membrane. The protein is Probable ABC transporter ECU01_0200/ECU01_1410 of Encephalitozoon cuniculi (strain GB-M1) (Microsporidian parasite).